The primary structure comprises 563 residues: Arginine--tRNA ligase (563 aa).

Positions 122–132 (PNIAKPMSMGH) match the 'HIGH' region motif.

Belongs to the class-I aminoacyl-tRNA synthetase family. As to quaternary structure, monomer.

The protein localises to the cytoplasm. The catalysed reaction is tRNA(Arg) + L-arginine + ATP = L-arginyl-tRNA(Arg) + AMP + diphosphate. The sequence is that of Arginine--tRNA ligase from Ligilactobacillus salivarius (strain UCC118) (Lactobacillus salivarius).